A 540-amino-acid chain; its full sequence is E3 ubiquitin-protein ligase rnf8-A (540 aa).

The region spanning 30–84 (VTLGRGLGVTYQLKPTLCPLMISRTHCLFKQNTGGEWTVTDNKSLNGVWRNKERL) is the FHA domain. The segment at 128 to 205 (LIRPLPDKTK…SGTESRLNDS (78 aa)) is disordered. Polar residues-rich tracts occupy residues 152 to 162 (ASGNEGPSNFS) and 179 to 200 (SSHT…GTES). The segment at 382-420 (CIICSEHFIEAVTLNCAHSFCSYCIKSWKKRKEECPICR) adopts an RING-type zinc-finger fold. The interval 517–540 (GTDELDSSDFESDDDEEEDSFLII) is disordered. Over residues 519–540 (DELDSSDFESDDDEEEDSFLII) the composition is skewed to acidic residues.

Belongs to the RNF8 family. As to quaternary structure, homodimer. Forms a E2-E3 ubiquitin ligase complex composed of the rnf8 homodimer and a E2 heterodimer of ube2n and ube2v2.

The protein resides in the nucleus. The catalysed reaction is S-ubiquitinyl-[E2 ubiquitin-conjugating enzyme]-L-cysteine + [acceptor protein]-L-lysine = [E2 ubiquitin-conjugating enzyme]-L-cysteine + N(6)-ubiquitinyl-[acceptor protein]-L-lysine.. Its pathway is protein modification; protein ubiquitination. Functionally, E3 ubiquitin-protein ligase that plays a key role in DNA damage signaling via 2 distinct roles: by mediating the 'Lys-63'-linked ubiquitination of histones H2A and H2AX and promoting the recruitment of DNA repair proteins at double-strand breaks (DSBs) sites, and by catalyzing 'Lys-48'-linked ubiquitination to remove target proteins from DNA damage sites. Following DNA DSBs, it is recruited to the sites of damage by ATM-phosphorylated mdc1 and catalyzes the 'Lys-63'-linked ubiquitination of histones H2A and H2AX, thereby promoting the formation of tp53bp1 and brca1 ionizing radiation-induced foci (IRIF). H2A ubiquitination also mediates the ATM-dependent transcriptional silencing at regions flanking DSBs in cis, a mechanism to avoid collision between transcription and repair intermediates. Also catalyzes the formation of 'Lys-48'-linked polyubiquitin chains, leading to degradation of substrate proteins. In addition to its function in damage signaling, also plays a role in higher-order chromatin structure by mediating extensive chromatin decondensation. The chain is E3 ubiquitin-protein ligase rnf8-A from Xenopus laevis (African clawed frog).